The sequence spans 247 residues: Cell division protein ZapD (247 aa).

This sequence belongs to the ZapD family. Interacts with FtsZ.

It localises to the cytoplasm. Functionally, cell division factor that enhances FtsZ-ring assembly. Directly interacts with FtsZ and promotes bundling of FtsZ protofilaments, with a reduction in FtsZ GTPase activity. This is Cell division protein ZapD from Shigella boydii serotype 18 (strain CDC 3083-94 / BS512).